We begin with the raw amino-acid sequence, 429 residues long: MSKSLQAIRGMNDILPAQTPTWRYLESTFAQLLESYGYSEIRLPILEFTDLFARGIGEGTDVVDKEMYTFLDRNEESLTLRPEGTAGCVRAVLEHGMTGGGQVQKLWYTGPMFRYEKPQKGRYRQFHQIGVEVFNQPGPDIDAELIVLTARLWKQLGLADAVTLQLNSLGSSEARARYRDALVAYLQQRFEQLDEDSQRRLTTNPLRILDSKNAQTQALLTDAPTLHDYLDEESRAHFEGLKARLDAVGIAYEINPKLVRGLDYYGRTVFEWVTDKLGAQGTVCAGGRYDGLVSQFGGKPTPGVGFAMGVERLVLLLETLGLVPETLNPAPHAYICAFGEAAELAALALAERLRDELPGLRLLVNAGGGSFKSQFKKADKSGARYALILGDDELAGRVVGCKPLRDDSEQQSIAWDALPERLAACLEQV.

The protein belongs to the class-II aminoacyl-tRNA synthetase family. As to quaternary structure, homodimer.

The protein localises to the cytoplasm. It catalyses the reaction tRNA(His) + L-histidine + ATP = L-histidyl-tRNA(His) + AMP + diphosphate + H(+). The sequence is that of Histidine--tRNA ligase from Stutzerimonas stutzeri (strain A1501) (Pseudomonas stutzeri).